A 750-amino-acid polypeptide reads, in one-letter code: GTP pyrophosphokinase rsh (750 aa).

Positions 45–144 (YFSHPLEVAA…VKLADRLHNM (100 aa)) constitute an HD domain. Residues 390-451 (DQVFCFTPKG…KNGDEVDIIR (62 aa)) enclose the TGS domain. The disordered stretch occupies residues 587–613 (AAKVDPAATTPKPGKRALPIRGTNPDL). The ACT domain maps to 676–750 (RISVSAINSP…SVSSAKRVNG (75 aa)).

The protein belongs to the RelA/SpoT family.

The catalysed reaction is GTP + ATP = guanosine 3'-diphosphate 5'-triphosphate + AMP. Functionally, functions as a (p)ppGpp synthase. In eubacteria ppGpp (guanosine 3'-diphosphate 5'-diphosphate) is a mediator of the stringent response that coordinates a variety of cellular activities in response to changes in nutritional abundance. It is necessary for persistence in mice, essential for intracellular growth of Brucella and required for expression of the type IV secretion system VirB and therefore plays a role in adaptation of Brucella to its intracellular host environment. This is GTP pyrophosphokinase rsh (rsh) from Brucella melitensis biotype 1 (strain ATCC 23456 / CCUG 17765 / NCTC 10094 / 16M).